The primary structure comprises 727 residues: Malate synthase G (727 aa).

Residues V117, 124–125 (RY), S275, and R312 each bind acetyl-CoA. The active-site Proton acceptor is the R339. Residues R339, E431, and 456–459 (GFLD) contribute to the glyoxylate site. 2 residues coordinate Mg(2+): E431 and D459. P540 is an acetyl-CoA binding site. C616 carries the post-translational modification Cysteine sulfenic acid (-SOH). D630 functions as the Proton donor in the catalytic mechanism.

The protein belongs to the malate synthase family. GlcB subfamily. Monomer. The cofactor is Mg(2+).

It localises to the cytoplasm. It carries out the reaction glyoxylate + acetyl-CoA + H2O = (S)-malate + CoA + H(+). Its pathway is carbohydrate metabolism; glyoxylate cycle; (S)-malate from isocitrate: step 2/2. Functionally, involved in the glycolate utilization. Catalyzes the condensation and subsequent hydrolysis of acetyl-coenzyme A (acetyl-CoA) and glyoxylate to form malate and CoA. The polypeptide is Malate synthase G (Halalkalibacterium halodurans (strain ATCC BAA-125 / DSM 18197 / FERM 7344 / JCM 9153 / C-125) (Bacillus halodurans)).